We begin with the raw amino-acid sequence, 213 residues long: Carboxysome shell protein CcmP (213 aa).

2 consecutive BMC circularly permuted domains span residues 4–106 (ELRS…RLKP) and 107–211 (KIVS…GDRS). The Probably important for pore gating motif lies at 69–70 (ER).

This sequence belongs to the EutL/PduB family. As to quaternary structure, a dimer of stacked trimers, the same faces interact.

Its subcellular location is the carboxysome. Functionally, probably part of the carboxysome shell, a polyhedral inclusion where RuBisCO (ribulose bisphosphate carboxylase, rbcL-rbcS) is sequestered. It is thought that this protein controls transport of RuBisCO reactants in and out of the carboxysome; residual densities in the 4 X-ray structures suggest that differing compounds bind in interior pockets, depending on the open or closed state of the pore. This Synechococcus elongatus (strain ATCC 33912 / PCC 7942 / FACHB-805) (Anacystis nidulans R2) protein is Carboxysome shell protein CcmP.